Here is a 129-residue protein sequence, read N- to C-terminus: Small ribosomal subunit protein uS11 (129 aa).

Residues 108-129 (TPIPHNGTRPPKRVLKRLRLKK) are disordered. A compositionally biased stretch (basic residues) spans 117 to 129 (PPKRVLKRLRLKK).

The protein belongs to the universal ribosomal protein uS11 family. Part of the 30S ribosomal subunit. Interacts with proteins S7 and S18. Binds to IF-3.

Located on the platform of the 30S subunit, it bridges several disparate RNA helices of the 16S rRNA. Forms part of the Shine-Dalgarno cleft in the 70S ribosome. The polypeptide is Small ribosomal subunit protein uS11 (Mycoplasmopsis synoviae (strain 53) (Mycoplasma synoviae)).